The following is a 677-amino-acid chain: UPF0652 protein (677 aa).

The B box-type; atypical zinc-finger motif lies at glutamate 38–lysine 84. 4 residues coordinate Zn(2+): cysteine 43, cysteine 46, cysteine 66, and histidine 71. The segment covering tyrosine 91–valine 111 has biased composition (basic and acidic residues). 2 disordered regions span residues tyrosine 91–isoleucine 142 and leucine 156–aspartate 192. Low complexity predominate over residues asparagine 113–asparagine 126. Over residues histidine 163–isoleucine 178 the composition is skewed to polar residues.

The protein belongs to the UPF0652 family.

This is UPF0652 protein from Dictyostelium discoideum (Social amoeba).